Consider the following 81-residue polypeptide: Large ribosomal subunit protein bL27 (81 aa).

The span at methionine 1 to lysine 11 shows a compositional bias: polar residues. Positions methionine 1–valine 23 are disordered.

Belongs to the bacterial ribosomal protein bL27 family.

This chain is Large ribosomal subunit protein bL27, found in Borrelia garinii subsp. bavariensis (strain ATCC BAA-2496 / DSM 23469 / PBi) (Borreliella bavariensis).